A 370-amino-acid chain; its full sequence is Putative agmatine deiminase (370 aa).

Positions 1-19 are enriched in polar residues; that stretch reads MTNMNVDATQLTTKPSQDG. A disordered region spans residues 1–20; that stretch reads MTNMNVDATQLTTKPSQDGF. The active-site Amidino-cysteine intermediate is the Cys361.

This sequence belongs to the agmatine deiminase family.

The catalysed reaction is agmatine + H2O = N-carbamoylputrescine + NH4(+). The chain is Putative agmatine deiminase from Shewanella frigidimarina (strain NCIMB 400).